The primary structure comprises 137 residues: MPTINQLVRKPRKSKAKKSDSPALNKGFNSMKKQFTDLNSPQKRGVCTRVGTMTPKKPNSALRKYARVRLSNNIEINAYIPGIGHNLQEHSVVLVRGGRVKDLPGVRYHIVRGALDTSGVEGRMQSRSLYGTKRPKK.

The segment at 1–28 (MPTINQLVRKPRKSKAKKSDSPALNKGF) is disordered. Asp102 bears the 3-methylthioaspartic acid mark.

It belongs to the universal ribosomal protein uS12 family. Part of the 30S ribosomal subunit. Contacts proteins S8 and S17. May interact with IF1 in the 30S initiation complex.

Functionally, with S4 and S5 plays an important role in translational accuracy. Its function is as follows. Interacts with and stabilizes bases of the 16S rRNA that are involved in tRNA selection in the A site and with the mRNA backbone. Located at the interface of the 30S and 50S subunits, it traverses the body of the 30S subunit contacting proteins on the other side and probably holding the rRNA structure together. The combined cluster of proteins S8, S12 and S17 appears to hold together the shoulder and platform of the 30S subunit. The sequence is that of Small ribosomal subunit protein uS12 from Staphylococcus carnosus (strain TM300).